The primary structure comprises 250 residues: PTB-containing, cubilin and LRP1-interacting protein (250 aa).

Residues 93-250 (VTYLGKVSTT…VSQELESDDG (158 aa)) form the PID domain. The tract at residues 229–250 (DGRIHSNSSSEEVSQELESDDG) is disordered. A phosphoserine mark is found at Ser236 and Ser247. The segment covering 241 to 250 (VSQELESDDG) has biased composition (acidic residues).

As to quaternary structure, found in a complex with PID1/PCLI1, LRP1 and CUBNI. Interacts with LRP1 and CUBN. In terms of tissue distribution, expressed in subcutaneous fat, heart, skeletal muscle, brain, colon, thymus, spleen, kidney, liver, small intestine, placenta, lung and peripheral blood leukocyte.

It localises to the cytoplasm. In terms of biological role, increases proliferation of preadipocytes without affecting adipocytic differentiation. The chain is PTB-containing, cubilin and LRP1-interacting protein (PID1) from Homo sapiens (Human).